We begin with the raw amino-acid sequence, 377 residues long: Putative glutamate--cysteine ligase 2 (377 aa).

The protein belongs to the glutamate--cysteine ligase type 2 family. YbdK subfamily.

It catalyses the reaction L-cysteine + L-glutamate + ATP = gamma-L-glutamyl-L-cysteine + ADP + phosphate + H(+). Its function is as follows. ATP-dependent carboxylate-amine ligase which exhibits weak glutamate--cysteine ligase activity. This chain is Putative glutamate--cysteine ligase 2, found in Pseudomonas aeruginosa (strain LESB58).